We begin with the raw amino-acid sequence, 88 residues long: Large ribosomal subunit protein eL31 (88 aa).

It belongs to the eukaryotic ribosomal protein eL31 family.

In Methanoregula boonei (strain DSM 21154 / JCM 14090 / 6A8), this protein is Large ribosomal subunit protein eL31.